The following is a 366-amino-acid chain: MVYYDLNIDSSLPEPKIKSMLSLHTKYGYDSVAITHTVEGKIGYKDVCKIKKIQIEDDSEKSTSSGWMKMGDSNKTIKQYTRLQVICKTMAEFQMITANNPVVQSYDIISVVPYDVSVFNAACNSNEIDIITIDTFSKFIIKPERVRQCIAKGIFIEILYGNLFGIDADRIAFFQIASSLVRSSFGKNIILSSSGKSSTTLRSPYDLSNLGHLFGLTFDQAKAAVSKHPHTAVLHAITRRTKGIATVTDPNLLKDLELWKLERKEDTQPTNNNIPHEKHINKESTGKETIPKPTTTTTTTTTTTTTAKTKTPTPTPTTEKTPSIPTQPPQKPTAKSNKKTTTNTTSTAQKQGKMDIDIDNNKRKRE.

The tract at residues Glu265–Glu366 is disordered. Residues Pro275–Ile290 show a composition bias toward basic and acidic residues. Low complexity-rich tracts occupy residues Pro291 to Ile324 and Thr333 to Gln351. The span at Gly352 to Glu366 shows a compositional bias: basic and acidic residues.

This sequence belongs to the eukaryotic/archaeal RNase P protein component 3 family.

It is found in the nucleus. It carries out the reaction Endonucleolytic cleavage of RNA, removing 5'-extranucleotides from tRNA precursor.. Its function is as follows. Component of ribonuclease P, a protein complex that generates mature tRNA molecules by cleaving their 5'-ends. The sequence is that of Ribonuclease P protein subunit drpp30 (drpp30) from Dictyostelium discoideum (Social amoeba).